The sequence spans 238 residues: N-(5'-phosphoribosyl)anthranilate isomerase (238 aa).

Belongs to the TrpF family.

It catalyses the reaction N-(5-phospho-beta-D-ribosyl)anthranilate = 1-(2-carboxyphenylamino)-1-deoxy-D-ribulose 5-phosphate. It participates in amino-acid biosynthesis; L-tryptophan biosynthesis; L-tryptophan from chorismate: step 3/5. The sequence is that of N-(5'-phosphoribosyl)anthranilate isomerase from Methanosarcina acetivorans (strain ATCC 35395 / DSM 2834 / JCM 12185 / C2A).